We begin with the raw amino-acid sequence, 833 residues long: Leucine--tRNA ligase (833 aa).

Residues 41 to 52 carry the 'HIGH' region motif; sequence PYPSGAGLHVGH. The short motif at 610–614 is the 'KMSKS' region element; sequence KMSKS. ATP is bound at residue Lys-613.

The protein belongs to the class-I aminoacyl-tRNA synthetase family.

The protein resides in the cytoplasm. It catalyses the reaction tRNA(Leu) + L-leucine + ATP = L-leucyl-tRNA(Leu) + AMP + diphosphate. The chain is Leucine--tRNA ligase from Streptococcus gordonii (strain Challis / ATCC 35105 / BCRC 15272 / CH1 / DL1 / V288).